The chain runs to 358 residues: UDP-N-acetylglucosamine--N-acetylmuramyl-(pentapeptide) pyrophosphoryl-undecaprenol N-acetylglucosamine transferase (358 aa).

UDP-N-acetyl-alpha-D-glucosamine-binding positions include 11–13 (TGG), Asn120, Arg161, Ser188, and Gln282.

The protein belongs to the glycosyltransferase 28 family. MurG subfamily.

Its subcellular location is the cell inner membrane. It carries out the reaction di-trans,octa-cis-undecaprenyl diphospho-N-acetyl-alpha-D-muramoyl-L-alanyl-D-glutamyl-meso-2,6-diaminopimeloyl-D-alanyl-D-alanine + UDP-N-acetyl-alpha-D-glucosamine = di-trans,octa-cis-undecaprenyl diphospho-[N-acetyl-alpha-D-glucosaminyl-(1-&gt;4)]-N-acetyl-alpha-D-muramoyl-L-alanyl-D-glutamyl-meso-2,6-diaminopimeloyl-D-alanyl-D-alanine + UDP + H(+). The protein operates within cell wall biogenesis; peptidoglycan biosynthesis. In terms of biological role, cell wall formation. Catalyzes the transfer of a GlcNAc subunit on undecaprenyl-pyrophosphoryl-MurNAc-pentapeptide (lipid intermediate I) to form undecaprenyl-pyrophosphoryl-MurNAc-(pentapeptide)GlcNAc (lipid intermediate II). The protein is UDP-N-acetylglucosamine--N-acetylmuramyl-(pentapeptide) pyrophosphoryl-undecaprenol N-acetylglucosamine transferase of Synechococcus sp. (strain CC9605).